The primary structure comprises 362 residues: MDVHLFDYVEPGNYSDINWPCNSSDCIVVDTVQCPAMPNKNVLLYTLSFIYIFIFVIGMIANSVVVWVNIQAKTTGYDTHCYILNLAIADLWVVITIPVWVVSLVQHNQWPMGELTCKITHLIFSINLFGSIFFLACMSVDRYLSITYFTSTSSYKKKMVRRVVCVLVWLLAFFVSLPDTYYLKTVTSASNNETYCRSFYPEHSIKEWLIGMELVSVILGFAVPFTIIAIFYFLLARAMSASGDQEKHSSRKIIFSYVVVFLVCWLPYHFVVLLDIFSILHYIPFTCQLENVLFTALHVTQCLSLVHCCVNPVLYSFINRNYRYELMKAFIFKYSAKTGLTKLIDASRVSETEYSALEQNTK.

The Extracellular portion of the chain corresponds to 1-47 (MDVHLFDYVEPGNYSDINWPCNSSDCIVVDTVQCPAMPNKNVLLYTL). N-linked (GlcNAc...) asparagine glycosylation is found at Asn13 and Asn22. A helical membrane pass occupies residues 48–68 (SFIYIFIFVIGMIANSVVVWV). At 69 to 81 (NIQAKTTGYDTHC) the chain is on the cytoplasmic side. A helical transmembrane segment spans residues 82–102 (YILNLAIADLWVVITIPVWVV). Over 103–118 (SLVQHNQWPMGELTCK) the chain is Extracellular. A disulfide bridge links Cys117 with Cys196. A helical transmembrane segment spans residues 119-139 (ITHLIFSINLFGSIFFLACMS). The Cytoplasmic segment spans residues 140 to 162 (VDRYLSITYFTSTSSYKKKMVRR). The chain crosses the membrane as a helical span at residues 163–183 (VVCVLVWLLAFFVSLPDTYYL). Topologically, residues 184 to 213 (KTVTSASNNETYCRSFYPEHSIKEWLIGME) are extracellular. A helical transmembrane segment spans residues 214-234 (LVSVILGFAVPFTIIAIFYFL). Residues 235–252 (LARAMSASGDQEKHSSRK) lie on the Cytoplasmic side of the membrane. A helical membrane pass occupies residues 253 to 273 (IIFSYVVVFLVCWLPYHFVVL). Topologically, residues 274 to 296 (LDIFSILHYIPFTCQLENVLFTA) are extracellular. Residues 297-319 (LHVTQCLSLVHCCVNPVLYSFIN) form a helical membrane-spanning segment. The Cytoplasmic segment spans residues 320–362 (RNYRYELMKAFIFKYSAKTGLTKLIDASRVSETEYSALEQNTK). A C-terminal cytoplasmic tail region spans residues 324 to 362 (YELMKAFIFKYSAKTGLTKLIDASRVSETEYSALEQNTK). 3 positions are modified to phosphoserine: Ser347, Ser350, and Ser355.

Belongs to the G-protein coupled receptor 1 family. Atypical chemokine receptor subfamily. Homodimer. Can form heterodimers with CXCR4; heterodimerization may regulate CXCR4 signaling activity. Interacts with ARRB1 and ARRB2. Post-translationally, the Ser/Thr residues in the C-terminal cytoplasmic tail may be phosphorylated. Ubiquitinated at the Lys residues in its C-terminal cytoplasmic tail and is essential for correct trafficking from and to the cell membrane. Deubiquitinated by CXCL12-stimulation in a reversible manner. As to expression, expressed in vascular smooth muscle cells (at protein level). In brain, expressed in blood vessels, pyramidal cells in hippocampal subfield CA3, mature dentate gyrus granule cells, ventricle walls, olfactory bulb, accumbens shell, supraoptic, lateroanterior and ventromedial hypothalamic nuclei, medial region of thalamus, and motor nuclei, central gray and raphe magnus nucleus of brain stem. Detected in primary neurons, GABAergic neurons, astrocytes, cerebral cortex, ventral striatum and choroid plexus. Not detected in mesencephalon.

Its subcellular location is the cell membrane. The protein resides in the early endosome. The protein localises to the recycling endosome. Functionally, atypical chemokine receptor that controls chemokine levels and localization via high-affinity chemokine binding that is uncoupled from classic ligand-driven signal transduction cascades, resulting instead in chemokine sequestration, degradation, or transcytosis. Also known as interceptor (internalizing receptor) or chemokine-scavenging receptor or chemokine decoy receptor. Acts as a receptor for chemokines CXCL11 and CXCL12/SDF1. Chemokine binding does not activate G-protein-mediated signal transduction but instead induces beta-arrestin recruitment, leading to ligand internalization and activation of MAPK signaling pathway. Required for regulation of CXCR4 protein levels in migrating interneurons, thereby adapting their chemokine responsiveness. In glioma cells, transduces signals via MEK/ERK pathway, mediating resistance to apoptosis. Promotes cell growth and survival. Not involved in cell migration, adhesion or proliferation of normal hematopoietic progenitors but activated by CXCL11 in malignant hemapoietic cells, leading to phosphorylation of ERK1/2 (MAPK3/MAPK1) and enhanced cell adhesion and migration. Plays a regulatory role in CXCR4-mediated activation of cell surface integrins by CXCL12. Required for heart valve development. Atypical chemokine receptor that controls chemokine levels and localization via high-affinity chemokine binding that is uncoupled from classic ligand-driven signal transduction cascades, resulting instead in chemokine sequestration, degradation, or transcytosis. Also known as interceptor (internalizing receptor) or chemokine-scavenging receptor or chemokine decoy receptor. Acts as a receptor for chemokines CXCL11 and CXCL12/SDF1. Chemokine binding does not activate G-protein-mediated signal transduction but instead induces beta-arrestin recruitment, leading to ligand internalization and activation of MAPK signaling pathway. Required for regulation of CXCR4 protein levels in migrating interneurons, thereby adapting their chemokine responsiveness. In glioma cells, transduces signals via MEK/ERK pathway, mediating resistance to apoptosis. Promotes cell growth and survival. Not involved in cell migration, adhesion or proliferation of normal hematopoietic progenitors but activated by CXCL11 in malignant hemapoietic cells, leading to phosphorylation of ERK1/2 (MAPK3/MAPK1) and enhanced cell adhesion and migration. Plays a regulatory role in CXCR4-mediated activation of cell surface integrins by CXCL12. Required for heart valve development. Regulates axon guidance in the oculomotor system through the regulation of CXCL12 levels. In Rattus norvegicus (Rat), this protein is Atypical chemokine receptor 3.